We begin with the raw amino-acid sequence, 95 residues long: Aspartyl/glutamyl-tRNA(Asn/Gln) amidotransferase subunit C (95 aa).

This sequence belongs to the GatC family. Heterotrimer of A, B and C subunits.

The enzyme catalyses L-glutamyl-tRNA(Gln) + L-glutamine + ATP + H2O = L-glutaminyl-tRNA(Gln) + L-glutamate + ADP + phosphate + H(+). It carries out the reaction L-aspartyl-tRNA(Asn) + L-glutamine + ATP + H2O = L-asparaginyl-tRNA(Asn) + L-glutamate + ADP + phosphate + 2 H(+). Allows the formation of correctly charged Asn-tRNA(Asn) or Gln-tRNA(Gln) through the transamidation of misacylated Asp-tRNA(Asn) or Glu-tRNA(Gln) in organisms which lack either or both of asparaginyl-tRNA or glutaminyl-tRNA synthetases. The reaction takes place in the presence of glutamine and ATP through an activated phospho-Asp-tRNA(Asn) or phospho-Glu-tRNA(Gln). The sequence is that of Aspartyl/glutamyl-tRNA(Asn/Gln) amidotransferase subunit C from Azotobacter vinelandii (strain DJ / ATCC BAA-1303).